Reading from the N-terminus, the 251-residue chain is Putative F-box protein L166 (251 aa).

One can recognise an F-box domain in the interval 1-46; it reads MDNICELFDEILPLIIEYLSDHDKVKFMTTCSRLYYFIDKVYYENI. Positions 188-251 are disordered; sequence PEPESQENFR…RPKSFMKYRR (64 aa). Residues 202–217 are compositionally biased toward polar residues; the sequence is TESNNNKPVNKSQPQI. Over residues 241–251 the composition is skewed to basic residues; the sequence is KRPKSFMKYRR.

The chain is Putative F-box protein L166 from Acanthamoeba polyphaga (Amoeba).